The following is a 442-amino-acid chain: Amino-acid acetyltransferase (442 aa).

Positions 295-442 (EQARAATIED…RSKVLSKTIS (148 aa)) constitute an N-acetyltransferase domain.

The protein belongs to the acetyltransferase family. ArgA subfamily.

It is found in the cytoplasm. It carries out the reaction L-glutamate + acetyl-CoA = N-acetyl-L-glutamate + CoA + H(+). It participates in amino-acid biosynthesis; L-arginine biosynthesis; N(2)-acetyl-L-ornithine from L-glutamate: step 1/4. The protein is Amino-acid acetyltransferase of Aeromonas salmonicida (strain A449).